The primary structure comprises 303 residues: Ferrochelatase (303 aa).

Fe cation contacts are provided by His-185 and Glu-262.

This sequence belongs to the ferrochelatase family.

It localises to the cytoplasm. It carries out the reaction heme b + 2 H(+) = protoporphyrin IX + Fe(2+). It participates in porphyrin-containing compound metabolism; protoheme biosynthesis; protoheme from protoporphyrin-IX: step 1/1. Catalyzes the ferrous insertion into protoporphyrin IX. The protein is Ferrochelatase of Campylobacter jejuni subsp. jejuni serotype O:2 (strain ATCC 700819 / NCTC 11168).